Here is a 273-residue protein sequence, read N- to C-terminus: 2,3,4,5-tetrahydropyridine-2,6-dicarboxylate N-succinyltransferase (273 aa).

This sequence belongs to the transferase hexapeptide repeat family.

Its subcellular location is the cytoplasm. It carries out the reaction (S)-2,3,4,5-tetrahydrodipicolinate + succinyl-CoA + H2O = (S)-2-succinylamino-6-oxoheptanedioate + CoA. Its pathway is amino-acid biosynthesis; L-lysine biosynthesis via DAP pathway; LL-2,6-diaminopimelate from (S)-tetrahydrodipicolinate (succinylase route): step 1/3. The protein is 2,3,4,5-tetrahydropyridine-2,6-dicarboxylate N-succinyltransferase of Acinetobacter baumannii (strain AB307-0294).